The sequence spans 913 residues: DNA repair endonuclease XPF (913 aa).

Positions 1-454 (MDRGISAVRK…EVWVNLRKGD (454 aa)) are helicase-like. 2 leucine-zipper regions span residues 233–254 (LNAC…DLSL) and 270–298 (LDPL…LQYL). Residue Lys289 is modified to N6-acetyllysine. The segment covering 453 to 476 (GDGPKRTMKSDKRPKDTKNKERAS) has biased composition (basic and acidic residues). 2 disordered regions span residues 453-525 (GDGP…CGGE) and 638-677 (VVPE…HNGT). The short motif at 483–488 (KRKKRE) is the Nuclear localization signal element. The segment covering 500–509 (EPPEEGAAEE) has biased composition (acidic residues). Ser518 is subject to Phosphoserine. Residues 638–649 (VVPEEREGRDET) show a composition bias toward basic and acidic residues. Positions 655–810 (RGTVSTDAPA…PSPHATAELF (156 aa)) are nuclease. One can recognise an ERCC4 domain in the interval 680–760 (SIVVDMREFR…RPVLLIEFDA (81 aa)). The segment at 834–902 (TLPESDKYNP…QLYDFLHTAY (69 aa)) is hhH2, dimerization with ERCC1.

This sequence belongs to the XPF family. In terms of assembly, heterodimer composed of ERCC1 and ERCC4/XPF. Interacts with SLX4/BTBD12; this interaction is direct and links the ERCC1-ERCC4/XPF complex to SLX4, which may coordinate the action of the structure-specific endonuclease during DNA repair. Mg(2+) serves as cofactor.

The protein resides in the nucleus. The protein localises to the chromosome. Catalytic component of a structure-specific DNA repair endonuclease responsible for the 5-prime incision during DNA repair, and which is essential for nucleotide excision repair (NER) and interstrand cross-link (ICL) repair. This is DNA repair endonuclease XPF from Cricetulus griseus (Chinese hamster).